The chain runs to 212 residues: MDRIPLPPMERPLIAILRGLKPEEAEGVVGALIETGFTAIEIPLNSPDPFRSIETAVKMAPAGCLIGAGTVLTTAQVERLADVGGRLMVSPNVEPAVIRLAATKGMVTMPGVFTPTEALAAAAAGASGLKFFPASVLGPSGITAIRAVLPGDLEIAAVGGVSEVNFADYAAIGIRSFGLGSSLYKPGMSAGDVRQRAIATLAAYDAVYGGQQ.

Position 18 (R18) interacts with 2-dehydro-3-deoxy-6-phospho-D-galactonate. The active-site Proton donor/acceptor is E41. 2-dehydro-3-deoxy-6-phospho-D-galactonate is bound by residues T70, K130, G160, G180, and S181. The active-site Schiff-base intermediate with substrate is the K130.

The protein belongs to the KHG/KDPG aldolase family. As to quaternary structure, homotrimer.

The catalysed reaction is 2-dehydro-3-deoxy-6-phospho-D-galactonate = D-glyceraldehyde 3-phosphate + pyruvate. Its pathway is carbohydrate acid metabolism; D-galactonate degradation; D-glyceraldehyde 3-phosphate and pyruvate from D-galactonate: step 3/3. In terms of biological role, involved in the degradation of galactose via the DeLey-Doudoroff pathway. Catalyzes the reversible, stereospecific retro-aldol cleavage of 2-keto-3-deoxy-6-phosphogalactonate (KDPGal) to pyruvate and D-glyceraldehyde-3-phosphate. The polypeptide is Probable 2-dehydro-3-deoxy-6-phosphogalactonate aldolase (dgoA) (Rhizobium meliloti (strain 1021) (Ensifer meliloti)).